A 264-amino-acid chain; its full sequence is Phosphatidylserine decarboxylase proenzyme (264 aa).

Residues Asp-86, His-142, and Ser-226 each act as charge relay system; for autoendoproteolytic cleavage activity in the active site. Ser-226 (schiff-base intermediate with substrate; via pyruvic acid; for decarboxylase activity) is an active-site residue. A Pyruvic acid (Ser); by autocatalysis modification is found at Ser-226.

The protein belongs to the phosphatidylserine decarboxylase family. PSD-B subfamily. Prokaryotic type I sub-subfamily. In terms of assembly, heterodimer of a large membrane-associated beta subunit and a small pyruvoyl-containing alpha subunit. Pyruvate is required as a cofactor. Is synthesized initially as an inactive proenzyme. Formation of the active enzyme involves a self-maturation process in which the active site pyruvoyl group is generated from an internal serine residue via an autocatalytic post-translational modification. Two non-identical subunits are generated from the proenzyme in this reaction, and the pyruvate is formed at the N-terminus of the alpha chain, which is derived from the carboxyl end of the proenzyme. The autoendoproteolytic cleavage occurs by a canonical serine protease mechanism, in which the side chain hydroxyl group of the serine supplies its oxygen atom to form the C-terminus of the beta chain, while the remainder of the serine residue undergoes an oxidative deamination to produce ammonia and the pyruvoyl prosthetic group on the alpha chain. During this reaction, the Ser that is part of the protease active site of the proenzyme becomes the pyruvoyl prosthetic group, which constitutes an essential element of the active site of the mature decarboxylase.

Its subcellular location is the cell membrane. It catalyses the reaction a 1,2-diacyl-sn-glycero-3-phospho-L-serine + H(+) = a 1,2-diacyl-sn-glycero-3-phosphoethanolamine + CO2. It participates in phospholipid metabolism; phosphatidylethanolamine biosynthesis; phosphatidylethanolamine from CDP-diacylglycerol: step 2/2. Functionally, catalyzes the formation of phosphatidylethanolamine (PtdEtn) from phosphatidylserine (PtdSer). The protein is Phosphatidylserine decarboxylase proenzyme of Geobacillus kaustophilus (strain HTA426).